The following is a 115-amino-acid chain: Large ribosomal subunit protein uL24 (115 aa).

This sequence belongs to the universal ribosomal protein uL24 family. In terms of assembly, part of the 50S ribosomal subunit.

Its function is as follows. One of two assembly initiator proteins, it binds directly to the 5'-end of the 23S rRNA, where it nucleates assembly of the 50S subunit. In terms of biological role, one of the proteins that surrounds the polypeptide exit tunnel on the outside of the subunit. The protein is Large ribosomal subunit protein uL24 of Beutenbergia cavernae (strain ATCC BAA-8 / DSM 12333 / CCUG 43141 / JCM 11478 / NBRC 16432 / NCIMB 13614 / HKI 0122).